Consider the following 716-residue polypeptide: Calpain clp-4 (716 aa).

The segment at 31-53 is disordered; sequence DDDDKQEAPVAVSKAPKGKGSNH. Residues 240–536 form the Calpain catalytic domain; that stretch reads LFEDPEFPAT…FTQMEVCNLT (297 aa). Active-site residues include C295, H452, and N476.

The protein belongs to the peptidase C2 family.

Calcium-regulated non-lysosomal thiol-protease which catalyzes limited proteolysis of substrates. Promotes starvation-induced muscle atrophy. The protein is Calpain clp-4 of Caenorhabditis elegans.